The sequence spans 564 residues: Serine/threonine-protein kinase DBF20 (564 aa).

At Ser-17 the chain carries Phosphoserine. The interval 24 to 62 (LNIPKPTSPQAQYRPARKSENGRLTPGLPRSYKPCDSDD) is disordered. A Protein kinase domain is found at 169–469 (FQILTQVGQG…FEQVRKMSYF (301 aa)). ATP contacts are provided by residues 175–183 (VGQGGYGQV) and Lys-198. The active-site Proton acceptor is Asp-292. A Phosphoserine modification is found at Ser-366. The AGC-kinase C-terminal domain maps to 470 to 547 (AEINFETLRT…RHRDGKQGSS (78 aa)). Thr-536 carries the phosphothreonine modification.

The protein belongs to the protein kinase superfamily. Ser/Thr protein kinase family.

It carries out the reaction L-seryl-[protein] + ATP = O-phospho-L-seryl-[protein] + ADP + H(+). The catalysed reaction is L-threonyl-[protein] + ATP = O-phospho-L-threonyl-[protein] + ADP + H(+). Is probably a Ser/Thr-protein kinase that may function in initiation of DNA synthesis and also in late nuclear division. This chain is Serine/threonine-protein kinase DBF20 (DBF20), found in Saccharomyces cerevisiae (strain ATCC 204508 / S288c) (Baker's yeast).